The sequence spans 206 residues: CASP-like protein 4B2 (206 aa).

2 stretches are compositionally biased toward low complexity: residues 1-12 (MAMVPADADAAA) and 24-36 (SSQN…AAAA). The segment at 1–42 (MAMVPADADAAAKPPPDVEKPDYSSQNGAPNSAAAAAGGGGG) is disordered. Over 1–60 (MAMVPADADAAAKPPPDVEKPDYSSQNGAPNSAAAAAGGGGGGVVDSVVARWRREDMLDK) the chain is Cytoplasmic. Residues 61–81 (SPLALHAAAAAFAFVALVLVA) traverse the membrane as a helical segment. The Extracellular segment spans residues 82–99 (SNQHGDWMEFDRYQEYRY). Residues 100 to 120 (LLAIAALAFAYSLAQALRHAL) traverse the membrane as a helical segment. Over 121–138 (RMRRGVDPVPTASGRLLD) the chain is Cytoplasmic. Residues 139 to 159 (FASDQVVAYLLMSALSAATPI) form a helical membrane-spanning segment. Residues 160–174 (TNRMRSAVINRFTDT) lie on the Extracellular side of the membrane. Residues 175–195 (TAAAISMAFLAFVSLALSAIV) traverse the membrane as a helical segment. Residues 196–206 (SGYKLSKQTYM) are Cytoplasmic-facing.

It belongs to the Casparian strip membrane proteins (CASP) family. As to quaternary structure, homodimer and heterodimers.

Its subcellular location is the cell membrane. The protein is CASP-like protein 4B2 of Oryza sativa subsp. japonica (Rice).